The primary structure comprises 184 residues: Endoribonuclease YbeY (184 aa).

Zn(2+)-binding residues include His118, His122, and His128.

It belongs to the endoribonuclease YbeY family. Zn(2+) is required as a cofactor.

The protein localises to the cytoplasm. Its function is as follows. Single strand-specific metallo-endoribonuclease involved in late-stage 70S ribosome quality control and in maturation of the 3' terminus of the 16S rRNA. This Nocardia farcinica (strain IFM 10152) protein is Endoribonuclease YbeY.